The chain runs to 205 residues: Outer-membrane lipoprotein LolB (205 aa).

An N-terminal signal peptide occupies residues 1 to 17; that stretch reads MFLRHCITFTMIALLAG. Cys18 carries N-palmitoyl cysteine lipidation. Cys18 carries the S-diacylglycerol cysteine lipid modification.

Belongs to the LolB family. As to quaternary structure, monomer.

The protein localises to the cell outer membrane. Its function is as follows. Plays a critical role in the incorporation of lipoproteins in the outer membrane after they are released by the LolA protein. The protein is Outer-membrane lipoprotein LolB of Pseudomonas putida (strain ATCC 700007 / DSM 6899 / JCM 31910 / BCRC 17059 / LMG 24140 / F1).